Consider the following 204-residue polypeptide: E3 ubiquitin-protein ligase MPSR1 (204 aa).

The RING-type; atypical zinc-finger motif lies at 113-154 (CVICLEEWKSEETVKEMPCKHRFHGGCIEKWLGFHGSCPVCR).

In terms of processing, autoubiquitinated.

It localises to the cytoplasm. It carries out the reaction S-ubiquitinyl-[E2 ubiquitin-conjugating enzyme]-L-cysteine + [acceptor protein]-L-lysine = [E2 ubiquitin-conjugating enzyme]-L-cysteine + N(6)-ubiquitinyl-[acceptor protein]-L-lysine.. In terms of biological role, E3 ubiquitin-protein ligase involved in protein quality control (PQC) under proteotoxic stress. Is essential to plant survival under proteotoxic stress. Functions by removing damaged proteins before they form cytotoxic aggregates. Recognizes misfolded proteins selectively and tethers polyubiquitin chains to the proteins directly for subsequent degradation by the 26S proteasome pathway. Targets misfolded proteins independently of cytoplasmic chaperones. Associates with the 26S proteasome and sustains the structural integrity of the proteasome complex at the initial stage of proteotoxic stress. Under normal conditions, MPSR1 becomes highly unstable by its autoubiquitination activity and is stabilized during proteotoxic stress by conjugating ubiquitins on misfolded proteins. This chain is E3 ubiquitin-protein ligase MPSR1, found in Arabidopsis thaliana (Mouse-ear cress).